The chain runs to 543 residues: Protein phosphatase 1G (543 aa).

Gly-2 carries N-myristoyl glycine lipidation. Position 22 is an omega-N-methylarginine (Arg-22). The 478-residue stretch at 26–503 (PYGFSAMQGW…DNMTCIIICF (478 aa)) folds into the PPM-type phosphatase domain. The Mn(2+) site is built by Asp-60 and Gly-61. Disordered stretches follow at residues 116-139 (QIAGRPTEDEDEKEKVADEDDVDN) and 163-326 (NCHK…SDSG). Thr-122 carries the post-translational modification Phosphothreonine. A compositionally biased stretch (acidic residues) spans 123–139 (EDEDEKEKVADEDDVDN). Ser-183 bears the Phosphoserine mark. Acidic residues predominate over residues 259–310 (DSEDESDEAEEEEEDSEECSEEEDGYSSEEAENEEDEDDTEEAEEDDEEEEM). Lys-381 bears the N6-acetyllysine mark. The Mn(2+) site is built by Asp-439 and Asp-494. A disordered region spans residues 508–543 (TAAPQPESGKRKLEEVLSTEGAEENGNSDKKKAKRD). At Ser-525 the chain carries Phosphoserine.

Belongs to the PP2C family. As to quaternary structure, interacts with NOL3; may dephosphorylate NOL3. Requires Mg(2+) as cofactor. Mn(2+) is required as a cofactor.

The protein localises to the cytoplasm. It is found in the membrane. It catalyses the reaction O-phospho-L-seryl-[protein] + H2O = L-seryl-[protein] + phosphate. The enzyme catalyses O-phospho-L-threonyl-[protein] + H2O = L-threonyl-[protein] + phosphate. The chain is Protein phosphatase 1G (PPM1G) from Bos taurus (Bovine).